A 295-amino-acid polypeptide reads, in one-letter code: Acetylglutamate kinase (295 aa).

Substrate-binding positions include 66-67 (GG), arginine 88, and asparagine 193.

The protein belongs to the acetylglutamate kinase family. ArgB subfamily.

It is found in the cytoplasm. The catalysed reaction is N-acetyl-L-glutamate + ATP = N-acetyl-L-glutamyl 5-phosphate + ADP. The protein operates within amino-acid biosynthesis; L-arginine biosynthesis; N(2)-acetyl-L-ornithine from L-glutamate: step 2/4. Its function is as follows. Catalyzes the ATP-dependent phosphorylation of N-acetyl-L-glutamate. In Rhizobium etli (strain ATCC 51251 / DSM 11541 / JCM 21823 / NBRC 15573 / CFN 42), this protein is Acetylglutamate kinase.